The primary structure comprises 360 residues: Peptide chain release factor 1 (360 aa).

N5-methylglutamine is present on Q233. A disordered region spans residues 286–305 (NEIAQERKSQVGTGDRSERI).

Belongs to the prokaryotic/mitochondrial release factor family. In terms of processing, methylated by PrmC. Methylation increases the termination efficiency of RF1.

It localises to the cytoplasm. Peptide chain release factor 1 directs the termination of translation in response to the peptide chain termination codons UAG and UAA. In Acetivibrio thermocellus (strain ATCC 27405 / DSM 1237 / JCM 9322 / NBRC 103400 / NCIMB 10682 / NRRL B-4536 / VPI 7372) (Clostridium thermocellum), this protein is Peptide chain release factor 1.